Reading from the N-terminus, the 455-residue chain is Ribosomal protein uS12 methylthiotransferase RimO (455 aa).

Residues 1–114 form the MTTase N-terminal domain; it reads MKYHIVTLGC…INALVGQLER (114 aa). [4Fe-4S] cluster-binding residues include Cys-10, Cys-46, Cys-78, Cys-166, Cys-170, and Cys-173. One can recognise a Radical SAM core domain in the interval 152 to 383; sequence THQTPSAYLK…MRLQQTISYT (232 aa). The region spanning 386–455 is the TRAM domain; the sequence is QRWVGRTIKV…AYDLWGEALS (70 aa).

The protein belongs to the methylthiotransferase family. RimO subfamily. It depends on [4Fe-4S] cluster as a cofactor.

The protein localises to the cytoplasm. It catalyses the reaction L-aspartate(89)-[ribosomal protein uS12]-hydrogen + (sulfur carrier)-SH + AH2 + 2 S-adenosyl-L-methionine = 3-methylsulfanyl-L-aspartate(89)-[ribosomal protein uS12]-hydrogen + (sulfur carrier)-H + 5'-deoxyadenosine + L-methionine + A + S-adenosyl-L-homocysteine + 2 H(+). In terms of biological role, catalyzes the methylthiolation of an aspartic acid residue of ribosomal protein uS12. This Chloroflexus aurantiacus (strain ATCC 29366 / DSM 635 / J-10-fl) protein is Ribosomal protein uS12 methylthiotransferase RimO.